The following is a 347-amino-acid chain: 4-hydroxy-3-methylbut-2-en-1-yl diphosphate synthase (flavodoxin) (347 aa).

Residues Cys259, Cys262, Cys294, and Glu301 each contribute to the [4Fe-4S] cluster site.

The protein belongs to the IspG family. Requires [4Fe-4S] cluster as cofactor.

The enzyme catalyses (2E)-4-hydroxy-3-methylbut-2-enyl diphosphate + oxidized [flavodoxin] + H2O + 2 H(+) = 2-C-methyl-D-erythritol 2,4-cyclic diphosphate + reduced [flavodoxin]. The protein operates within isoprenoid biosynthesis; isopentenyl diphosphate biosynthesis via DXP pathway; isopentenyl diphosphate from 1-deoxy-D-xylulose 5-phosphate: step 5/6. Functionally, converts 2C-methyl-D-erythritol 2,4-cyclodiphosphate (ME-2,4cPP) into 1-hydroxy-2-methyl-2-(E)-butenyl 4-diphosphate. In Caldicellulosiruptor saccharolyticus (strain ATCC 43494 / DSM 8903 / Tp8T 6331), this protein is 4-hydroxy-3-methylbut-2-en-1-yl diphosphate synthase (flavodoxin).